A 199-amino-acid polypeptide reads, in one-letter code: Peroxiredoxin-1 (199 aa).

Ser-2 carries the N-acetylserine modification. In terms of domain architecture, Thioredoxin spans 6–165 (AKIGHRAPQF…TLRLVQAFQF (160 aa)). Lys-7 carries the post-translational modification N6-acetyllysine; alternate. Lys-7 participates in a covalent cross-link: Glycyl lysine isopeptide (Lys-Gly) (interchain with G-Cter in SUMO2); alternate. Residues Lys-16 and Lys-27 each carry the N6-acetyllysine modification. Lys-35 is modified (N6-acetyllysine; alternate). Lys-35 bears the N6-succinyllysine; alternate mark. Cys-52 acts as the Cysteine sulfenic acid (-SOH) intermediate in catalysis. Phosphothreonine is present on Thr-90. A Glycyl lysine isopeptide (Lys-Gly) (interchain with G-Cter in SUMO2) cross-link involves residue Lys-120. The residue at position 136 (Lys-136) is an N6-acetyllysine. The disordered stretch occupies residues 176–199 (GWKPGSDTIKPDVQKSKEYFSKQK). Residues 184 to 199 (IKPDVQKSKEYFSKQK) are compositionally biased toward basic and acidic residues. Lys-185 participates in a covalent cross-link: Glycyl lysine isopeptide (Lys-Gly) (interchain with G-Cter in SUMO1). Lys-197 bears the N6-acetyllysine mark.

Belongs to the peroxiredoxin family. AhpC/Prx1 subfamily. As to quaternary structure, homodimer; disulfide-linked, upon oxidation. 5 homodimers assemble to form a ring-like decamer. Interacts with GDPD5; forms a mixed-disulfide with GDPD5. Interacts with SESN1 and SESN2. Interacts with FAM107A. Post-translationally, phosphorylated on Thr-90 during the M-phase, which leads to a decrease in enzymatic activity. Acetylation increases reducing activity and resistance to superoxidation. Deacetylated by HDAC6 which decreases reducing activity.

The protein localises to the cytoplasm. The catalysed reaction is a hydroperoxide + [thioredoxin]-dithiol = an alcohol + [thioredoxin]-disulfide + H2O. Its function is as follows. Thiol-specific peroxidase that catalyzes the reduction of hydrogen peroxide and organic hydroperoxides to water and alcohols, respectively. Plays a role in cell protection against oxidative stress by detoxifying peroxides and as sensor of hydrogen peroxide-mediated signaling events. Might participate in the signaling cascades of growth factors and tumor necrosis factor-alpha by regulating the intracellular concentrations of H(2)O(2). Reduces an intramolecular disulfide bond in GDPD5 that gates the ability to GDPD5 to drive postmitotic motor neuron differentiation. This Bos taurus (Bovine) protein is Peroxiredoxin-1 (PRDX1).